Reading from the N-terminus, the 252-residue chain is Hydroxyacylglutathione hydrolase (252 aa).

7 residues coordinate Zn(2+): H54, H56, D58, H59, H111, D128, and H166.

Belongs to the metallo-beta-lactamase superfamily. Glyoxalase II family. In terms of assembly, monomer. Requires Zn(2+) as cofactor.

The enzyme catalyses an S-(2-hydroxyacyl)glutathione + H2O = a 2-hydroxy carboxylate + glutathione + H(+). Its pathway is secondary metabolite metabolism; methylglyoxal degradation; (R)-lactate from methylglyoxal: step 2/2. Functionally, thiolesterase that catalyzes the hydrolysis of S-D-lactoyl-glutathione to form glutathione and D-lactic acid. In Aliivibrio salmonicida (strain LFI1238) (Vibrio salmonicida (strain LFI1238)), this protein is Hydroxyacylglutathione hydrolase.